Reading from the N-terminus, the 89-residue chain is Huwentoxin-IV (89 aa).

The signal sequence occupies residues 1-24; it reads MVNMKASMFLALAGLVLLFVVCYA. Positions 25–52 are excised as a propeptide; that stretch reads SESEEKEFSNELLSSVLAVDDNSKGEER. Glu53 carries the post-translational modification Pyrrolidone carboxylic acid (Glu); partial. 3 cysteine pairs are disulfide-bonded: Cys54-Cys69, Cys61-Cys76, and Cys68-Cys83. Ile87 bears the Isoleucine amide mark.

The protein belongs to the neurotoxin 10 (Hwtx-1) family. 22 (Htx-4) subfamily. In terms of processing, two forms of huwentoxin-IV exist in the venom of H.schmidti, a non-N-terminally modified (HwTx-IV) and a naturally modified peptide with pyroglutamic acid residue at position 53 (mHwTx-IV). mHwTx-IV shows no observable difference with the unmodified toxin when applied to the TTX-S sodium channel of DRG neuron (IC(50)~50 nM) or when tested on hNav1.7/SCN9A (IC(50)=30.8 nM). In addition, similarly to the unmodified toxin, mHwTx-IV has only a weak affinity for lipid membranes. However, in contrast with HwTx-IV, which dissociates at moderate and high depolarization voltages (50-200 mV), mHwTx-IV inhibition of TTX-sensitive sodium channels is not reversed by strong depolarization voltages. Expressed by the venom gland.

It localises to the secreted. This lethal neurotoxin (without cyclization at position 53) inhibits neuronal voltage-gated sodium channel Nav1.2/SCN2A (IC(50)=10-150 nM), rNav1.3/SCN3A (IC(50)=338 nM), Nav1.6/SCN8A (IC(50)=117 nM), and hNav1.7/SCN9A (IC(50)=9.6-33 nM). It inhibits activation of sodium channel by trapping the voltage sensor of domain II (DIIS4) in the closed configuration. The toxin neither shifts the Nav1.7/SCN9A activation curve nor modifies the slope factor. It does not slow fast-inactivation of hNav1.7/SCN9A channels. In addition, it has only a weak affinity for lipid membranes. This toxin also exists with a pyroglutamate at position 53. The sole difference observed between modified (mHwTx-IV) and unmodified toxins is that moderate or high depolarization voltages (200 mV) permit the unmodified toxin to dissociate, whereas mHwTx-IV toxin does not dissociate, even at high depolarization voltages. These data indicate that mHwTx-IV strongly binds to voltage sensor of sodium channel even at extreme depolarization voltages. This chain is Huwentoxin-IV, found in Cyriopagopus schmidti (Chinese bird spider).